The sequence spans 576 residues: MLRNTPFGATPTYKLLLGFGLCSLGGAMLYAYFKTRNDEEEADSGGQRPASGIRGQTEEQKPQKEVCLKIVVDNEHVPLIMGRGGSNIKLIEEKTLAKIRLRDKDSGHKFCDISGVPDAVKAARALLIKEIERAPVVKVELQVPQRLASKINGRGGELLQEIRSSSLAKLNIDLNGRNGKAKITIIGNQKQVNIARKMLDDQIEEDEELVRSMEEVEQRREPRRSPTNSIASSMYSSQTSLSSHTQPRDKLMASKGEGKPMEVYVSAVASPTKFWVQLIGPQSKKLDSMVQEMTSYYSSAENRAKHVLTAPYVGQIVAAVFKFDEKWYRAEIVDIMPNQYNPKEQVIDLYFVDYGDSEYISPADICELRTDFLTLRFQAVECFLANVKSTIQTEPITWPKSSIAKFEELTEVAHWRKLIARVVTYKERPRATTAVSAAAKEGTPLPGVELFDPADNSELNIADLMITQGFALPLDDSYPVRSRSSTPSSNSDSTIEELCVSNPVTPLTPHSPMSMSIDVDSITQAENEHLAQQLQHLQHKLNGNDIKNINPAKLTATDLENGNNNNASTTNGASAH.

The segment at 40-60 (EEADSGGQRPASGIRGQTEEQ) is disordered. KH domains are found at residues 65 to 127 (EVCL…RALL) and 136 to 199 (VVKV…RKML). Residues 209-224 (LVRSMEEVEQRREPRR) are compositionally biased toward basic and acidic residues. The segment at 209–253 (LVRSMEEVEQRREPRRSPTNSIASSMYSSQTSLSSHTQPRDKLMA) is disordered. The span at 232–243 (SSMYSSQTSLSS) shows a compositional bias: low complexity. The 66-residue stretch at 310 to 375 (APYVGQIVAA…CELRTDFLTL (66 aa)) folds into the Tudor domain. A disordered region spans residues 556-576 (ATDLENGNNNNASTTNGASAH). Residues 561 to 576 (NGNNNNASTTNGASAH) are compositionally biased toward low complexity.

It belongs to the Tdrkh family. Interacts (via C-terminus) with AGO3 (via the N-terminal region when symmetrically methylated on arginine residues); this interaction is RNA-independent and may be required for AGO3 localization to the nuage. Interacts (via Tudor domain) with piwi (via N-terminus). Interacts with tral and me31B. Ovaries (at protein level). Expressed in the ovary and testis.

Its subcellular location is the cytoplasm. It localises to the nucleus. The protein localises to the cytoplasmic ribonucleoprotein granule. In terms of biological role, involved in the piwi-interacting RNA (piRNA) metabolic process, which mediates the repression of transposable elements during meiosis by forming complexes composed of piRNAs and Piwi proteins, and governs the methylation and subsequent repression of transposons which is essential for germline integrity. Likely to act by recruiting Piwi proteins such as AGO3 and piwi to the piRNA biogenesis machinery in the nuage. Required for the final steps of primary piRNA biogenesis by participating in the 3' end-trimming of piwi-bound intermediates into mature piRNAs. This Drosophila melanogaster (Fruit fly) protein is Tudor and KH domain-containing protein homolog.